We begin with the raw amino-acid sequence, 107 residues long: MQFSTTPTLEGQNIVEYCGVVTGEAILGANIFRDFFAGIRDIVGGRSGSYEKELRKAREIAFQELGEQAKALGADAVVGIDIDYETVGKDSSMLMVSVSGTAVKTRR.

It belongs to the UPF0145 family.

The protein is UPF0145 protein CKO_02237 of Citrobacter koseri (strain ATCC BAA-895 / CDC 4225-83 / SGSC4696).